We begin with the raw amino-acid sequence, 456 residues long: tRNA modification GTPase MnmE (456 aa).

Positions 24, 81, and 120 each coordinate (6S)-5-formyl-5,6,7,8-tetrahydrofolate. Positions 216-379 (GMTVVIAGRP…LRDHLKACMG (164 aa)) constitute a TrmE-type G domain. Asparagine 226 contacts K(+). GTP contacts are provided by residues 226–231 (NAGKSS), 245–251 (TDIAGTT), 270–273 (DTAG), 335–338 (NKAD), and 359–361 (SAR). A Mg(2+)-binding site is contributed by serine 230. K(+) contacts are provided by threonine 245, isoleucine 247, and threonine 250. Position 251 (threonine 251) interacts with Mg(2+). Lysine 456 is a (6S)-5-formyl-5,6,7,8-tetrahydrofolate binding site.

The protein belongs to the TRAFAC class TrmE-Era-EngA-EngB-Septin-like GTPase superfamily. TrmE GTPase family. In terms of assembly, homodimer. Heterotetramer of two MnmE and two MnmG subunits. The cofactor is K(+).

The protein localises to the cytoplasm. Functionally, exhibits a very high intrinsic GTPase hydrolysis rate. Involved in the addition of a carboxymethylaminomethyl (cmnm) group at the wobble position (U34) of certain tRNAs, forming tRNA-cmnm(5)s(2)U34. The protein is tRNA modification GTPase MnmE of Pseudomonas entomophila (strain L48).